The primary structure comprises 152 residues: 3-dehydroquinate dehydratase (152 aa).

The active-site Proton acceptor is the Y26. Substrate contacts are provided by N78, H84, and D91. H104 functions as the Proton donor in the catalytic mechanism. Substrate contacts are provided by residues L105–S106 and R115.

It belongs to the type-II 3-dehydroquinase family. Homododecamer.

It carries out the reaction 3-dehydroquinate = 3-dehydroshikimate + H2O. Its pathway is metabolic intermediate biosynthesis; chorismate biosynthesis; chorismate from D-erythrose 4-phosphate and phosphoenolpyruvate: step 3/7. In terms of biological role, catalyzes a trans-dehydration via an enolate intermediate. The polypeptide is 3-dehydroquinate dehydratase (Idiomarina loihiensis (strain ATCC BAA-735 / DSM 15497 / L2-TR)).